Reading from the N-terminus, the 659-residue chain is Pentatricopeptide repeat-containing protein At3g26782, mitochondrial (659 aa).

A mitochondrion-targeting transit peptide spans 1–24 (MKVRSKKALFCSVSRLLHTERHTE). PPR repeat units follow at residues 40–74 (DVFS…SLYP), 75–109 (TRSS…GYQS), 110–144 (DIFV…NIVS), 145–171 (WTSM…LLVD), 182–216 (DSMG…GFDR), 217–249 (GVSV…IVDK), 250–284 (DRVS…KVVT), 286–320 (NAIT…GLED), 321–351 (DVIV…MKNK), 352–386 (NVRS…GVRP), 387–422 (NYIT…GVEP), and 423–453 (GLEH…MKMK). Positions 458–533 (IWSSLLAACR…PPGFSLLELN (76 aa)) are type E motif. The type E(+) motif stretch occupies residues 534-564 (GEVHVFLIGDEEHPQREKIYEFLAELNRKLL). A type DYW motif region spans residues 565–659 (EAGYVSNTSS…DGGCSCGDYW (95 aa)).

The protein belongs to the PPR family. PCMP-H subfamily.

Its subcellular location is the mitochondrion. This chain is Pentatricopeptide repeat-containing protein At3g26782, mitochondrial (PCMP-H34), found in Arabidopsis thaliana (Mouse-ear cress).